The primary structure comprises 558 residues: Glucose-6-phosphate isomerase (558 aa).

A2 bears the N-acetylalanine mark. Position 12 is an N6-acetyllysine (K12). N6-(2-hydroxyisobutyryl)lysine is present on K34. At S107 the chain carries Phosphoserine. T109 carries the post-translational modification Phosphothreonine. K142 carries the post-translational modification N6-acetyllysine. 159-160 (GS) is a D-glucose 6-phosphate binding site. S185 bears the Phosphoserine; by CK2 mark. 210-215 (SKTFTT) provides a ligand contact to D-glucose 6-phosphate. T250 is modified (phosphothreonine). Q354, E358, and H389 together coordinate D-glucose 6-phosphate. Catalysis depends on E358, which acts as the Proton donor. H389 is an active-site residue. K454 is subject to N6-acetyllysine; alternate. Residue K454 is modified to N6-malonyllysine; alternate. K454 bears the N6-succinyllysine; alternate mark. Residue S455 is modified to Phosphoserine. K519 contributes to the D-glucose 6-phosphate binding site. K519 is an active-site residue.

It belongs to the GPI family. In terms of assembly, homodimer; in the catalytically active form. Monomer in the secreted form. Post-translationally, phosphorylation at Ser-185 by CK2 has been shown to decrease enzymatic activity and may contribute to secretion by a non-classical secretory pathway. In terms of processing, ISGylated.

The protein resides in the cytoplasm. The protein localises to the secreted. It catalyses the reaction alpha-D-glucose 6-phosphate = beta-D-fructose 6-phosphate. It functions in the pathway carbohydrate degradation; glycolysis; D-glyceraldehyde 3-phosphate and glycerone phosphate from D-glucose: step 2/4. In the cytoplasm, catalyzes the conversion of glucose-6-phosphate to fructose-6-phosphate, the second step in glycolysis, and the reverse reaction during gluconeogenesis. Besides it's role as a glycolytic enzyme, also acts as a secreted cytokine: acts as an angiogenic factor (AMF) that stimulates endothelial cell motility. Acts as a neurotrophic factor, neuroleukin, for spinal and sensory neurons. It is secreted by lectin-stimulated T-cells and induces immunoglobulin secretion. The chain is Glucose-6-phosphate isomerase from Macaca fascicularis (Crab-eating macaque).